The primary structure comprises 798 residues: Tripartite terminase subunit 1 (798 aa).

The C3H1-type zinc-finger motif lies at 191 to 219 (CFQCYEELMAVPNQGRSINRRMQGLLCDH). The span at 416-429 (AAGAARSRAEAASG) shows a compositional bias: low complexity. A disordered region spans residues 416–458 (AAGAARSRAEAASGAGAGGEEGAGAAAGRGNTGGDEGAGTTTA). Residues 430 to 452 (AGAGGEEGAGAAAGRGNTGGDEG) are compositionally biased toward gly residues. 674-681 (YNETFGKQ) provides a ligand contact to ATP.

The protein belongs to the herpesviridae TRM1 protein family. As to quaternary structure, associates with TRM2 and TRM3 to form the tripartite terminase complex. Interacts with portal protein.

Its subcellular location is the host nucleus. In terms of biological role, component of the molecular motor that translocates viral genomic DNA in empty capsid during DNA packaging. Forms a tripartite terminase complex together with TRM2 and TRM3 in the host cytoplasm. Once the complex reaches the host nucleus, it interacts with the capsid portal vertex. This portal forms a ring in which genomic DNA is translocated into the capsid. TRM1 carries an endonuclease activity that plays an important role for the cleavage of concatemeric viral DNA into unit length genomes. In Murid herpesvirus 1 (strain Smith) (MuHV-1), this protein is Tripartite terminase subunit 1.